The following is a 540-amino-acid chain: Chaperonin GroEL (540 aa).

ATP contacts are provided by residues 29–32 (TLGP), 86–90 (DGTTT), glycine 413, and aspartate 493. Positions 520–540 (AEKPEPKPAPGPADPGAGMDF) are disordered.

This sequence belongs to the chaperonin (HSP60) family. In terms of assembly, forms a cylinder of 14 subunits composed of two heptameric rings stacked back-to-back. Interacts with the co-chaperonin GroES.

Its subcellular location is the cytoplasm. It carries out the reaction ATP + H2O + a folded polypeptide = ADP + phosphate + an unfolded polypeptide.. Functionally, together with its co-chaperonin GroES, plays an essential role in assisting protein folding. The GroEL-GroES system forms a nano-cage that allows encapsulation of the non-native substrate proteins and provides a physical environment optimized to promote and accelerate protein folding. In Tropheryma whipplei (Whipple's bacillus), this protein is Chaperonin GroEL.